The following is a 92-amino-acid chain: UPF0298 protein ABC2380 (92 aa).

It belongs to the UPF0298 family.

It is found in the cytoplasm. This is UPF0298 protein ABC2380 from Shouchella clausii (strain KSM-K16) (Alkalihalobacillus clausii).